A 217-amino-acid polypeptide reads, in one-letter code: Large ribosomal subunit protein bL25 (217 aa).

The span at 195–211 (PAEGAAAAPAKGAAKGA) shows a compositional bias: low complexity. The tract at residues 195–217 (PAEGAAAAPAKGAAKGAAKGGKK) is disordered.

This sequence belongs to the bacterial ribosomal protein bL25 family. CTC subfamily. Part of the 50S ribosomal subunit; part of the 5S rRNA/L5/L18/L25 subcomplex. Contacts the 5S rRNA. Binds to the 5S rRNA independently of L5 and L18.

Functionally, this is one of the proteins that binds to the 5S RNA in the ribosome where it forms part of the central protuberance. The sequence is that of Large ribosomal subunit protein bL25 from Acidiphilium cryptum (strain JF-5).